We begin with the raw amino-acid sequence, 420 residues long: 4-hydroxy-3-methylbut-2-en-1-yl diphosphate synthase (flavodoxin) (420 aa).

Positions 307, 310, 353, and 360 each coordinate [4Fe-4S] cluster.

Belongs to the IspG family. It depends on [4Fe-4S] cluster as a cofactor.

The enzyme catalyses (2E)-4-hydroxy-3-methylbut-2-enyl diphosphate + oxidized [flavodoxin] + H2O + 2 H(+) = 2-C-methyl-D-erythritol 2,4-cyclic diphosphate + reduced [flavodoxin]. Its pathway is isoprenoid biosynthesis; isopentenyl diphosphate biosynthesis via DXP pathway; isopentenyl diphosphate from 1-deoxy-D-xylulose 5-phosphate: step 5/6. In terms of biological role, converts 2C-methyl-D-erythritol 2,4-cyclodiphosphate (ME-2,4cPP) into 1-hydroxy-2-methyl-2-(E)-butenyl 4-diphosphate. The chain is 4-hydroxy-3-methylbut-2-en-1-yl diphosphate synthase (flavodoxin) from Brucella suis biovar 1 (strain 1330).